The following is a 440-amino-acid chain: Chromosomal replication initiator protein DnaA (440 aa).

Residues 1–93 (MNVQLNEIWN…QTPVKPVAQE (93 aa)) form a domain I, interacts with DnaA modulators region. The tract at residues 94–101 (YTEDSNMS) is domain II. The segment at 102-318 (FLNPKYTFDT…GALNRVIAYS (217 aa)) is domain III, AAA+ region. ATP-binding residues include Gly-146, Gly-148, Lys-149, and Thr-150. Positions 319 to 440 (TLTENIINVD…EEIKKNITGG (122 aa)) are domain IV, binds dsDNA.

Belongs to the DnaA family. Oligomerizes as a right-handed, spiral filament on DNA at oriC.

Its subcellular location is the cytoplasm. Plays an essential role in the initiation and regulation of chromosomal replication. ATP-DnaA binds to the origin of replication (oriC) to initiate formation of the DNA replication initiation complex once per cell cycle. Binds the DnaA box (a 9 base pair repeat at the origin) and separates the double-stranded (ds)DNA. Forms a right-handed helical filament on oriC DNA; dsDNA binds to the exterior of the filament while single-stranded (ss)DNA is stabiized in the filament's interior. The ATP-DnaA-oriC complex binds and stabilizes one strand of the AT-rich DNA unwinding element (DUE), permitting loading of DNA polymerase. After initiation quickly degrades to an ADP-DnaA complex that is not apt for DNA replication. Binds acidic phospholipids. This is Chromosomal replication initiator protein DnaA from Ruminiclostridium cellulolyticum (strain ATCC 35319 / DSM 5812 / JCM 6584 / H10) (Clostridium cellulolyticum).